The primary structure comprises 168 residues: Small ribosomal subunit protein uS5 (168 aa).

One can recognise an S5 DRBM domain in the interval 13–76; sequence LAEKLIAVNR…EKARRNMINV (64 aa).

The protein belongs to the universal ribosomal protein uS5 family. As to quaternary structure, part of the 30S ribosomal subunit. Contacts proteins S4 and S8.

In terms of biological role, with S4 and S12 plays an important role in translational accuracy. Functionally, located at the back of the 30S subunit body where it stabilizes the conformation of the head with respect to the body. The polypeptide is Small ribosomal subunit protein uS5 (Pseudoalteromonas translucida (strain TAC 125)).